The chain runs to 187 residues: Chlorobenzene dioxygenase subunit beta (187 aa).

This sequence belongs to the bacterial ring-hydroxylating dioxygenase beta subunit family. This dioxygenase system consists of four proteins: the two subunits of the oxygenase component (TecA1 and TecA2), a ferredoxin (TecA3) and a ferredoxin reductase (TecA4).

It carries out the reaction chlorobenzene + NADH + O2 + H(+) = (1R,2R)-3-chlorocyclohexa-3,5-diene-1,2-diol + NAD(+). It functions in the pathway aromatic compound metabolism. Part of the oxygenase component of the chlorobenzene dioxygenase system that catalyzes the dihydroxylation of a range of aromatic compounds, including chlorinated benzenes and toluenes, and dinuclear aromatics such as biphenyl and dibenzo-p-dioxin. The beta subunit is not directly involved in the control of substrate specificity. This Cupriavidus sp. (strain PS12) protein is Chlorobenzene dioxygenase subunit beta.